A 293-amino-acid polypeptide reads, in one-letter code: Oxidoreductase clz16 (293 aa).

Belongs to the asaB hydroxylase/desaturase family.

The protein operates within secondary metabolite biosynthesis. Functionally, oxidoreductase; part of the gene cluster that mediates the biosynthesis of squalestatin S1 (SQS1, also known as zaragozic acid A), a heavily oxidized fungal polyketide that offers potent cholesterol lowering activity by targeting squalene synthase (SS). SQS1 is composed of a 2,8-dioxobicyclic[3.2.1]octane-3,4,5-tricarboxyclic acid core that is connected to two lipophilic polyketide arms. These initial steps feature the priming of an unusual benzoic acid starter unit onto the highly reducing polyketide synthase clz14, followed by oxaloacetate extension and product release to generate a tricarboxylic acid containing product. The phenylalanine ammonia lyase (PAL) clz10 and the acyl-CoA ligase clz12 are involved in transforming phenylalanine into benzoyl-CoA. The citrate synthase-like protein clz17 is involved in connecting the C-alpha-carbons of the hexaketide chain and oxaloacetate to afford the tricarboxylic acid unit. The potential hydrolytic enzymes, clz11 and clz13, are in close proximity to pks2 and may participate in product release. On the other side, the tetraketide arm is synthesized by a the squalestatin tetraketide synthase clz2 and enzymatically esterified to the core in the last biosynthetic step, by the acetyltransferase clz6. The biosynthesis of the tetraketide must involve 3 rounds of chain extension. After the first and second rounds methyl-transfer occurs, and in all rounds of extension the ketoreductase and dehydratase are active. The enoyl reductase and C-MeT of clz2 are not active in the final round of extension. The acetyltransferase clz6 appears to have a broad substrate selectivity for its acyl CoA substrate, allowing the in vitro synthesis of novel squalestatins. The biosynthesis of SQS1 requires several oxidative steps likely performed by oxidoreductases clz3, clz15 and clz16. Finally, in support of the identification of the cluster as being responsible for SQS1 production, the cluster contains a gene encoding a putative squalene synthase (SS) clz20, suggesting a likely mechanism for self-resistance. The protein is Oxidoreductase clz16 of Cochliobolus lunatus (Filamentous fungus).